A 232-amino-acid polypeptide reads, in one-letter code: MSQYCAADPIQRMVSRKGPYLDTQQQRVYKHRSGTGHGTNIRQPTTGIVEATFLQNNSGMNAVHPTTLNVQTHNAHATGRTIAKSVDTNSWVNDFSSMKVQDPLEFADSYKNLYKQYEQKQFHNTVPAQCPRNLYIPTVTRPQTTLNIVDHHEDKSSAVDQLIDDEFEKIEEEVKDQNQKLEFQESAQSFIEICERSQMKEKLQRSKFFQVMQKVSDGEATIRQDGENYVIR.

A Glycyl cysteine thioester (Cys-Gly) (interchain with G-Cter in ubiquitin) cross-link involves residue Cys5.

It belongs to the peroxin-21 family. In terms of assembly, interacts with PEX7. Monoubiquitinated at Cys-5; acts as a signal for PEX21 extraction and is required for proper export from peroxisomes and recycling.

The protein localises to the cytoplasm. It is found in the cytosol. The protein resides in the peroxisome. Mediates peroxisomal import of proteins containing a C-terminal PTS2-type peroxisomal targeting signal via its interaction with PEX7. Interaction with PEX7 only takes place when PEX7 is associated with cargo proteins containing a PTS2 peroxisomal targeting signal. PEX7 along with PTS2-containing cargo proteins are then translocated through the PEX13-PEX14 docking complex together with PEX21. The chain is Peroxisomal protein PEX21 (PEX21) from Candida glabrata (strain ATCC 2001 / BCRC 20586 / JCM 3761 / NBRC 0622 / NRRL Y-65 / CBS 138) (Yeast).